The following is a 589-amino-acid chain: uncharacterized protein (589 aa).

The 73-residue stretch at 242–314 (TALEVRNIPE…RFIKIFWYNP (73 aa)) folds into the RRM domain. Disordered regions lie at residues 322 to 348 (PKKF…VDPA), 443 to 465 (ESPA…RGTN), and 566 to 589 (TSME…GRWR). Residue serine 330 is modified to Phosphoserine. The span at 330–340 (SPTTSDSSNVE) shows a compositional bias: low complexity. Threonine 332 carries the phosphothreonine modification. A Phosphoserine modification is found at serine 334. Over residues 566 to 579 (TSMETGESNTSDNM) the composition is skewed to polar residues.

It localises to the nucleus. This is an uncharacterized protein from Schizosaccharomyces pombe (strain 972 / ATCC 24843) (Fission yeast).